The following is an 883-amino-acid chain: Valine--tRNA ligase (883 aa).

A 'HIGH' region motif is present at residues P50–H60. Positions K527 to S531 match the 'KMSKS' region motif. Position 530 (K530) interacts with ATP. Positions L811 to A883 form a coiled coil. The tract at residues Q859 to A883 is disordered.

The protein belongs to the class-I aminoacyl-tRNA synthetase family. ValS type 1 subfamily. Monomer.

The protein resides in the cytoplasm. It carries out the reaction tRNA(Val) + L-valine + ATP = L-valyl-tRNA(Val) + AMP + diphosphate. Catalyzes the attachment of valine to tRNA(Val). As ValRS can inadvertently accommodate and process structurally similar amino acids such as threonine, to avoid such errors, it has a 'posttransfer' editing activity that hydrolyzes mischarged Thr-tRNA(Val) in a tRNA-dependent manner. This Lacticaseibacillus casei (Lactobacillus casei) protein is Valine--tRNA ligase.